A 158-amino-acid chain; its full sequence is Transcription elongation factor GreA (158 aa).

Residues Glu53–Gln73 are a coiled coil.

It belongs to the GreA/GreB family.

Its function is as follows. Necessary for efficient RNA polymerase transcription elongation past template-encoded arresting sites. The arresting sites in DNA have the property of trapping a certain fraction of elongating RNA polymerases that pass through, resulting in locked ternary complexes. Cleavage of the nascent transcript by cleavage factors such as GreA or GreB allows the resumption of elongation from the new 3'terminus. GreA releases sequences of 2 to 3 nucleotides. This chain is Transcription elongation factor GreA, found in Pseudomonas aeruginosa (strain ATCC 15692 / DSM 22644 / CIP 104116 / JCM 14847 / LMG 12228 / 1C / PRS 101 / PAO1).